The sequence spans 472 residues: Kynureninase 1 (472 aa).

Pyridoxal 5'-phosphate contacts are provided by residues Leu146, Thr147, 174 to 177 (FPSD), Ser231, Asp260, His263, and Tyr285. At Lys286 the chain carries N6-(pyridoxal phosphate)lysine. 2 residues coordinate pyridoxal 5'-phosphate: Trp326 and Asn354.

This sequence belongs to the kynureninase family. In terms of assembly, homodimer. Requires pyridoxal 5'-phosphate as cofactor.

It is found in the cytoplasm. The enzyme catalyses L-kynurenine + H2O = anthranilate + L-alanine + H(+). The catalysed reaction is 3-hydroxy-L-kynurenine + H2O = 3-hydroxyanthranilate + L-alanine + H(+). It functions in the pathway amino-acid degradation; L-kynurenine degradation; L-alanine and anthranilate from L-kynurenine: step 1/1. It participates in cofactor biosynthesis; NAD(+) biosynthesis; quinolinate from L-kynurenine: step 2/3. Functionally, catalyzes the cleavage of L-kynurenine (L-Kyn) and L-3-hydroxykynurenine (L-3OHKyn) into anthranilic acid (AA) and 3-hydroxyanthranilic acid (3-OHAA), respectively. This Aspergillus niger (strain ATCC MYA-4892 / CBS 513.88 / FGSC A1513) protein is Kynureninase 1 (bna5-1).